The sequence spans 130 residues: Ribosome-binding factor A (130 aa).

It belongs to the RbfA family. As to quaternary structure, monomer. Binds 30S ribosomal subunits, but not 50S ribosomal subunits or 70S ribosomes.

It is found in the cytoplasm. Functionally, one of several proteins that assist in the late maturation steps of the functional core of the 30S ribosomal subunit. Associates with free 30S ribosomal subunits (but not with 30S subunits that are part of 70S ribosomes or polysomes). Required for efficient processing of 16S rRNA. May interact with the 5'-terminal helix region of 16S rRNA. This Prochlorococcus marinus (strain MIT 9312) protein is Ribosome-binding factor A.